Here is a 164-residue protein sequence, read N- to C-terminus: 3-isopropylmalate dehydratase small subunit 1 (164 aa).

Belongs to the LeuD family. LeuD type 2 subfamily. Heterodimer of LeuC and LeuD.

The catalysed reaction is (2R,3S)-3-isopropylmalate = (2S)-2-isopropylmalate. It functions in the pathway amino-acid biosynthesis; L-leucine biosynthesis; L-leucine from 3-methyl-2-oxobutanoate: step 2/4. Its function is as follows. Catalyzes the isomerization between 2-isopropylmalate and 3-isopropylmalate, via the formation of 2-isopropylmaleate. This Pyrococcus furiosus (strain ATCC 43587 / DSM 3638 / JCM 8422 / Vc1) protein is 3-isopropylmalate dehydratase small subunit 1 (leuD1).